The sequence spans 576 residues: Sulfite reductase [NADPH] hemoprotein beta-component (576 aa).

[4Fe-4S] cluster is bound by residues Cys-435, Cys-441, Cys-480, and Cys-484. Cys-484 is a binding site for siroheme.

Belongs to the nitrite and sulfite reductase 4Fe-4S domain family. Alpha(8)-beta(8). The alpha component is a flavoprotein, the beta component is a hemoprotein. Siroheme is required as a cofactor. Requires [4Fe-4S] cluster as cofactor.

It catalyses the reaction hydrogen sulfide + 3 NADP(+) + 3 H2O = sulfite + 3 NADPH + 4 H(+). It participates in sulfur metabolism; hydrogen sulfide biosynthesis; hydrogen sulfide from sulfite (NADPH route): step 1/1. In terms of biological role, component of the sulfite reductase complex that catalyzes the 6-electron reduction of sulfite to sulfide. This is one of several activities required for the biosynthesis of L-cysteine from sulfate. This chain is Sulfite reductase [NADPH] hemoprotein beta-component, found in Yersinia pseudotuberculosis serotype IB (strain PB1/+).